We begin with the raw amino-acid sequence, 686 residues long: 3',5'-cyclic-AMP phosphodiesterase 4C (686 aa).

Phosphoserine occurs at positions 9, 28, 40, and 83. Disordered regions lie at residues 88-116 and 124-143; these read NGLP…VHHV and YRSD…TSSA. Positions 124–133 are enriched in basic and acidic residues; the sequence is YRSDSDHEPS. Residues 313–642 enclose the PDEase domain; the sequence is VQTDQEEQLA…EWYQSRIPCS (330 aa). His389 (proton donor) is an active-site residue. 3',5'-cyclic AMP is bound at residue His389. AMP-binding residues include His389 and His393. Positions 393, 429, 430, and 547 each coordinate Zn(2+). Residues Asp430, Asp547, Gln598, and Phe601 each contribute to the AMP site. Residue Asp430 participates in Mg(2+) binding. Position 430 (Asp430) interacts with Mn(2+). 2 residues coordinate 3',5'-cyclic AMP: Gln598 and Phe601. Ser642 bears the Phosphoserine mark. The segment covering 660–671 has biased composition (acidic residues); the sequence is EAEEEEEEEDEG. The tract at residues 660-686 is disordered; it reads EAEEEEEEEDEGQCTALNRESSELPST. The segment covering 674–686 has biased composition (polar residues); the sequence is TALNRESSELPST.

This sequence belongs to the cyclic nucleotide phosphodiesterase family. PDE4 subfamily. Part of a complex containing AKAP5, ADCY5, ADCY6 and PKD2. Zn(2+) serves as cofactor. It depends on Mg(2+) as a cofactor. The cofactor is Mn(2+).

It localises to the cell projection. The protein resides in the cilium. The catalysed reaction is 3',5'-cyclic AMP + H2O = AMP + H(+). The protein operates within purine metabolism; 3',5'-cyclic AMP degradation; AMP from 3',5'-cyclic AMP: step 1/1. Its function is as follows. Hydrolyzes the second messenger cAMP, which is a key regulator of many important physiological processes. The protein is 3',5'-cyclic-AMP phosphodiesterase 4C of Mus musculus (Mouse).